A 459-amino-acid polypeptide reads, in one-letter code: MFS-type transporter SLC18B1 (459 aa).

Met1 carries the N-acetylmethionine modification. Low complexity predominate over residues 1 to 10 (MDEAGSPAPA). Residues 1–27 (MDEAGSPAPAGTGGGDDPGGSTRETSR) are disordered. The Cytoplasmic portion of the chain corresponds to 1–33 (MDEAGSPAPAGTGGGDDPGGSTRETSRRLSREQ). Phosphoserine is present on Ser21. Residues 34–54 (IFVLVSAASMNLGCMMTYSIL) form a helical membrane-spanning segment. Over 55-70 (GPFFPKEAEKKGASNT) the chain is Extracellular. A helical membrane pass occupies residues 71-91 (MIGMIFGCYALFELLASLVFG). The Cytoplasmic segment spans residues 92–100 (KYLVHIGAK). Residues 101–121 (FMFIAGMFVSGGVTILFGVLD) form a helical membrane-spanning segment. The Extracellular segment spans residues 122–127 (QLPEGP). The helical transmembrane segment at 128–148 (IFIAMCFLVRIVDAIGFGAAI) threads the bilayer. The Cytoplasmic segment spans residues 149 to 167 (TASSSILAKAFPNNVATVM). Residues 168–188 (GSLEVFSGLGLVAGPPLGGLL) form a helical membrane-spanning segment. Residues 189–195 (YQSFGYE) are Extracellular-facing. The helical transmembrane segment at 196–216 (VPFIFLGCIVLLMIPLNLYIL) threads the bilayer. Over 217-235 (PSYAQESDPGKQSFWKLVT) the chain is Cytoplasmic. The helical transmembrane segment at 236 to 256 (LPKMGLLAFVIISLSSCFGFL) threads the bilayer. The Extracellular portion of the chain corresponds to 257–274 (DPTLSLFVMEKFSLSTGY). Residues 275–295 (VGLVFLGLSLSYAISSPLFGL) form a helical membrane-spanning segment. At 296–306 (LSDKMPTLRKW) the chain is on the cytoplasmic side. The helical transmembrane segment at 307–327 (LLVFGNLITAGCYMLLGPVPL) threads the bilayer. Residues 328-333 (LHIKSQ) lie on the Extracellular side of the membrane. A helical membrane pass occupies residues 334–354 (LWLLVLVLVVNGISAGMSIIP). At 355–379 (TFPEMLSCAYANGFEDSISTLGLVS) the chain is on the cytoplasmic side. Residues 380–400 (GLFGAMWSVGAFMGPILGGFL) form a helical membrane-spanning segment. Residues 401 to 409 (CEKIGFEWA) are Extracellular-facing. Residues 410–430 (AAMQGLWTLLSGVSMALFYLW) traverse the membrane as a helical segment. Residues 431-459 (EDSTARRRSKAQNSLGTEEERAALLPNDT) are Cytoplasmic-facing. Residues 440–459 (KAQNSLGTEEERAALLPNDT) form a disordered region.

Belongs to the major facilitator superfamily. Widely expressed, with highest expression in the lung, pancreas and kidney. High expression in the CNS, particularly in the hypothalamus, the thalamus and the cerebellum. In the forebrain, abundantly expressed in the telencephalon, especially in the cerebral cortex layers, except layer 1, as well as in the induseum griseum, the piriform area, the taenia tecta, dorsal part and in the entorhinal area, lateral part. Lower levels in the bed anterior olfactory nucleus, posteroventral part and in layer two of the olfactory tubercle. In the amygdala, high levels observed in the intercalated nucleus and the medial nucleus. In the diencephalon, expressed in the nuclei in both the hypothalamus and thalamus. Among the hypothalamic areas, strongest expression in the arcuate nucleus and in the ventromedial nucleus, as well as in the suprachiasmatic nucleus, anterior nucleus, especially in its central part, and in the magnocellular division of the paraventricular nucleus. In the thalamus, highest levels in the medial habenula. Expression also observed in the paraventricular thalamic nucleus, parataenial nucleus, central medial nucleus, intermediodorsal nucleus and lateral dorsal nucleus. In the hindbrain, detected in the cerebellum and in the pons. In the midbrain and the medulla, expression levels were modest. In the midbrain, highest expression in the periaqueductal gray and all subdivisions of the interpeduncular nucleus, except for the caudal part. In the pons, the strongest labeling was seen in the nucleus incertus and in the tegmental nucleus. Expressed in bone marrow-derived mast cells (at protein level).

It is found in the cytoplasmic vesicle. The protein localises to the secretory vesicle membrane. The protein resides in the secretory vesicle. Its subcellular location is the synaptic vesicle membrane. The enzyme catalyses spermine(in) + n H(+)(out) = spermine(out) + n H(+)(in). The catalysed reaction is spermidine(in) + n H(+)(out) = spermidine(out) + n H(+)(in). It catalyses the reaction serotonin(in) + n H(+)(out) = serotonin(out) + n H(+)(in). In terms of biological role, proton-coupled polyamine antiporter involved in the translocation of polyamines from cytosol into secretory vesicles prior to their release via exocytosis. Uses the electrochemical proton gradient generated by a V-type proton-pumping ATPase to couple the efflux of protons with the uptake of a polyamine molecule. Facilitates vesicular storage of spermine and spermidine in astrocytes with an impact on glutamatergic neuronal transmission and memory formation. Upon antigen stimulation, regulates polyamine accumulation and release in mast cell secretory granules, which in turn potentiates mast cell degranulation and histamine secretion. This is MFS-type transporter SLC18B1 from Mus musculus (Mouse).